Reading from the N-terminus, the 580-residue chain is NADH-ubiquinone oxidoreductase chain 5 (580 aa).

16 consecutive transmembrane segments (helical) span residues 12 to 32, 50 to 70, 92 to 112, 113 to 133, 153 to 173, 176 to 196, 218 to 240, 249 to 269, 274 to 294, 300 to 320, 343 to 363, 378 to 400, 427 to 447, 464 to 484, 500 to 520, and 560 to 580; these read FYIL…FLLM, IVMT…VLLI, ILLV…PNLI, SILL…IYFQ, VALL…YIFY, MMKN…AAMT, SALV…FNIL, FLLL…NFEF, IIAL…SIGY, FHLL…GVII, CSCF…AGFY, NFFS…FRLV, IFFL…LMFF, MVCL…FFFI, MWFM…ILGM, and IYLL…LFLN.

This sequence belongs to the complex I subunit 5 family.

Its subcellular location is the mitochondrion inner membrane. The catalysed reaction is a ubiquinone + NADH + 5 H(+)(in) = a ubiquinol + NAD(+) + 4 H(+)(out). Core subunit of the mitochondrial membrane respiratory chain NADH dehydrogenase (Complex I) that is believed to belong to the minimal assembly required for catalysis. Complex I functions in the transfer of electrons from NADH to the respiratory chain. The immediate electron acceptor for the enzyme is believed to be ubiquinone. The chain is NADH-ubiquinone oxidoreductase chain 5 from Aedes aegypti (Yellowfever mosquito).